The chain runs to 121 residues: Transposase InsC for insertion element IS2A (121 aa).

This sequence belongs to the transposase 8 family.

Functionally, involved in the transposition of the insertion sequence IS2. The protein is Transposase InsC for insertion element IS2A (insC1) of Escherichia coli (strain K12).